The sequence spans 146 residues: Large ribosomal subunit protein uL23B (146 aa).

Positions 1–22 are disordered; it reads MAPSSNKVGKAIQAKKAVVKGS.

The protein belongs to the universal ribosomal protein uL23 family.

In terms of biological role, this protein binds to a specific region on the 26S rRNA. This Caenorhabditis elegans protein is Large ribosomal subunit protein uL23B (rpl-23A.2).